The primary structure comprises 318 residues: Methionyl-tRNA formyltransferase (318 aa).

A (6S)-5,6,7,8-tetrahydrofolate-binding site is contributed by Ser110–Pro113.

Belongs to the Fmt family.

It carries out the reaction L-methionyl-tRNA(fMet) + (6R)-10-formyltetrahydrofolate = N-formyl-L-methionyl-tRNA(fMet) + (6S)-5,6,7,8-tetrahydrofolate + H(+). In terms of biological role, attaches a formyl group to the free amino group of methionyl-tRNA(fMet). The formyl group appears to play a dual role in the initiator identity of N-formylmethionyl-tRNA by promoting its recognition by IF2 and preventing the misappropriation of this tRNA by the elongation apparatus. In Geobacillus sp. (strain WCH70), this protein is Methionyl-tRNA formyltransferase.